The following is a 545-amino-acid chain: CTP synthase (545 aa).

Positions 1 to 266 (MTTRYIFVTG…DDLVVKRFGL (266 aa)) are amidoligase domain. Ser-14 provides a ligand contact to CTP. Residue Ser-14 participates in UTP binding. Residues 15–20 (SLGKGI) and Asp-72 contribute to the ATP site. Mg(2+) contacts are provided by Asp-72 and Glu-140. CTP-binding positions include 147-149 (DIE), 187-192 (KTKPTQ), and Lys-223. UTP-binding positions include 187–192 (KTKPTQ) and Lys-223. Position 239-241 (239-241 (KDV)) interacts with ATP. Residues 291-542 (VIGMVGKYIE…IAAASAHQKR (252 aa)) form the Glutamine amidotransferase type-1 domain. Gly-352 contacts L-glutamine. The Nucleophile; for glutamine hydrolysis role is filled by Cys-379. L-glutamine contacts are provided by residues 380 to 383 (LGMQ), Glu-403, and Arg-470. Catalysis depends on residues His-515 and Glu-517.

The protein belongs to the CTP synthase family. As to quaternary structure, homotetramer.

The catalysed reaction is UTP + L-glutamine + ATP + H2O = CTP + L-glutamate + ADP + phosphate + 2 H(+). It carries out the reaction L-glutamine + H2O = L-glutamate + NH4(+). The enzyme catalyses UTP + NH4(+) + ATP = CTP + ADP + phosphate + 2 H(+). It participates in pyrimidine metabolism; CTP biosynthesis via de novo pathway; CTP from UDP: step 2/2. Its activity is regulated as follows. Allosterically activated by GTP, when glutamine is the substrate; GTP has no effect on the reaction when ammonia is the substrate. The allosteric effector GTP functions by stabilizing the protein conformation that binds the tetrahedral intermediate(s) formed during glutamine hydrolysis. Inhibited by the product CTP, via allosteric rather than competitive inhibition. Catalyzes the ATP-dependent amination of UTP to CTP with either L-glutamine or ammonia as the source of nitrogen. Regulates intracellular CTP levels through interactions with the four ribonucleotide triphosphates. The sequence is that of CTP synthase from Shewanella baltica (strain OS155 / ATCC BAA-1091).